Consider the following 78-residue polypeptide: LYR motif-containing protein 9 (78 aa).

The protein belongs to the complex I LYR family. LYRM9 subfamily.

In Mus musculus (Mouse), this protein is LYR motif-containing protein 9 (Lyrm9).